The chain runs to 194 residues: CASP-like protein 2C1 (194 aa).

Topologically, residues 1 to 18 (MSSYMEAAAAARAAEAKT) are cytoplasmic. Residues 19-39 (EGLLRGACALLAAAAALLVGL) traverse the membrane as a helical segment. Residues 40-59 (NTQTETVLFIRKKATVKDVQ) are Extracellular-facing. Residues 60–80 (ALWVLAMAAAAAAGYHLLQLL) form a helical membrane-spanning segment. Residues 81 to 109 (RCFYLSRFADGKPCRHRRAIAWLCFLLDK) lie on the Cytoplasmic side of the membrane. The chain crosses the membrane as a helical span at residues 110 to 130 (GCAYITFATTVAAAQACVVAL). The Extracellular segment spans residues 131–151 (YGTHALQWTKLCNIYTRFCEQ). Residues 152 to 172 (VAGSLVCAMLAAVGTALLSVV) form a helical membrane-spanning segment. Residues 173–194 (SARNLFRLYPSMLSPPPSSFVG) lie on the Cytoplasmic side of the membrane.

The protein belongs to the Casparian strip membrane proteins (CASP) family. In terms of assembly, homodimer and heterodimers.

The protein localises to the cell membrane. The protein is CASP-like protein 2C1 of Oryza sativa subsp. japonica (Rice).